The sequence spans 98 residues: Large ribosomal subunit protein uL23 (98 aa).

It belongs to the universal ribosomal protein uL23 family. As to quaternary structure, part of the 50S ribosomal subunit. Contacts protein L29, and trigger factor when it is bound to the ribosome.

Its function is as follows. One of the early assembly proteins it binds 23S rRNA. One of the proteins that surrounds the polypeptide exit tunnel on the outside of the ribosome. Forms the main docking site for trigger factor binding to the ribosome. In Borreliella afzelii (strain PKo) (Borrelia afzelii), this protein is Large ribosomal subunit protein uL23.